The sequence spans 367 residues: tRNA/tmRNA (uracil-C(5))-methyltransferase (367 aa).

Residues Gln189, Tyr217, Asn222, Glu238, and Asp298 each coordinate S-adenosyl-L-methionine. Catalysis depends on Cys323, which acts as the Nucleophile. Residue Glu357 is the Proton acceptor of the active site.

Belongs to the class I-like SAM-binding methyltransferase superfamily. RNA M5U methyltransferase family. TrmA subfamily.

It catalyses the reaction uridine(54) in tRNA + S-adenosyl-L-methionine = 5-methyluridine(54) in tRNA + S-adenosyl-L-homocysteine + H(+). The catalysed reaction is uridine(341) in tmRNA + S-adenosyl-L-methionine = 5-methyluridine(341) in tmRNA + S-adenosyl-L-homocysteine + H(+). In terms of biological role, dual-specificity methyltransferase that catalyzes the formation of 5-methyluridine at position 54 (m5U54) in all tRNAs, and that of position 341 (m5U341) in tmRNA (transfer-mRNA). This Pseudoalteromonas translucida (strain TAC 125) protein is tRNA/tmRNA (uracil-C(5))-methyltransferase.